The sequence spans 210 residues: Large ribosomal subunit protein uL3 (210 aa).

It belongs to the universal ribosomal protein uL3 family. As to quaternary structure, part of the 50S ribosomal subunit. Forms a cluster with proteins L14 and L19.

Functionally, one of the primary rRNA binding proteins, it binds directly near the 3'-end of the 23S rRNA, where it nucleates assembly of the 50S subunit. The polypeptide is Large ribosomal subunit protein uL3 (Geobacter metallireducens (strain ATCC 53774 / DSM 7210 / GS-15)).